Reading from the N-terminus, the 197-residue chain is Fe/S biogenesis protein NfuA (197 aa).

Cysteine 155 and cysteine 158 together coordinate [4Fe-4S] cluster.

Belongs to the NfuA family. Homodimer. [4Fe-4S] cluster is required as a cofactor.

Functionally, involved in iron-sulfur cluster biogenesis. Binds a 4Fe-4S cluster, can transfer this cluster to apoproteins, and thereby intervenes in the maturation of Fe/S proteins. Could also act as a scaffold/chaperone for damaged Fe/S proteins. In Pseudomonas savastanoi pv. phaseolicola (strain 1448A / Race 6) (Pseudomonas syringae pv. phaseolicola (strain 1448A / Race 6)), this protein is Fe/S biogenesis protein NfuA.